Reading from the N-terminus, the 239-residue chain is Fatty acid metabolism regulator protein (239 aa).

In terms of domain architecture, HTH gntR-type spans 6–74 (KGPASFAEKY…HGKPTQVNNF (69 aa)). A DNA-binding region (H-T-H motif) is located at residues 34 to 53 (ERELSELIGVTRTTLREVLQ).

Homodimer.

The protein localises to the cytoplasm. Its function is as follows. Multifunctional regulator of fatty acid metabolism. This chain is Fatty acid metabolism regulator protein, found in Shewanella frigidimarina (strain NCIMB 400).